Consider the following 260-residue polypeptide: Histidine-binding periplasmic protein (260 aa).

The first 22 residues, 1 to 22 (MKKLALSLSLVLAFSSATAAFA), serve as a signal peptide directing secretion. A disulfide bridge connects residues cysteine 60 and cysteine 67. Residues serine 91, serine 92, serine 94, arginine 99, threonine 143, and aspartate 183 each contribute to the L-histidine site.

It belongs to the bacterial solute-binding protein 3 family. In terms of assembly, the complex is composed of two ATP-binding proteins (HisP), two transmembrane proteins (HisM and HisQ) and a solute-binding protein (HisJ).

It is found in the periplasm. In terms of biological role, part of the ABC transporter complex HisPMQJ involved in histidine transport. Binds histidine. Interacts with HisQMP and stimulates ATPase activity of HisP, which results in histidine translocation. May have some additional function(s) in translocation that is independent of the stimulation of ATP hydrolysis. The protein is Histidine-binding periplasmic protein of Salmonella typhimurium (strain LT2 / SGSC1412 / ATCC 700720).